The following is a 108-amino-acid chain: Phosphoribosyl-ATP pyrophosphatase (108 aa).

Belongs to the PRA-PH family.

The protein resides in the cytoplasm. It carries out the reaction 1-(5-phospho-beta-D-ribosyl)-ATP + H2O = 1-(5-phospho-beta-D-ribosyl)-5'-AMP + diphosphate + H(+). The protein operates within amino-acid biosynthesis; L-histidine biosynthesis; L-histidine from 5-phospho-alpha-D-ribose 1-diphosphate: step 2/9. This is Phosphoribosyl-ATP pyrophosphatase from Chromobacterium violaceum (strain ATCC 12472 / DSM 30191 / JCM 1249 / CCUG 213 / NBRC 12614 / NCIMB 9131 / NCTC 9757 / MK).